Here is a 147-residue protein sequence, read N- to C-terminus: Hemoglobin subunit delta (147 aa).

The Globin domain maps to 3-147; sequence HLTADETALV…VANALAHKYH (145 aa). S51 carries the phosphoserine modification. Residues H64 and H93 each coordinate heme b.

This sequence belongs to the globin family. As to quaternary structure, heterotetramer of two delta chains and two alpha chains. Red blood cells.

This chain is Hemoglobin subunit delta (HBD), found in Dugong dugon (Dugong).